The chain runs to 225 residues: NAD(P)H-quinone oxidoreductase subunit K, chloroplastic (225 aa).

[4Fe-4S] cluster contacts are provided by Cys43, Cys44, Cys108, and Cys139.

It belongs to the complex I 20 kDa subunit family. In terms of assembly, NDH is composed of at least 16 different subunits, 5 of which are encoded in the nucleus. [4Fe-4S] cluster is required as a cofactor.

Its subcellular location is the plastid. The protein localises to the chloroplast thylakoid membrane. The catalysed reaction is a plastoquinone + NADH + (n+1) H(+)(in) = a plastoquinol + NAD(+) + n H(+)(out). It carries out the reaction a plastoquinone + NADPH + (n+1) H(+)(in) = a plastoquinol + NADP(+) + n H(+)(out). NDH shuttles electrons from NAD(P)H:plastoquinone, via FMN and iron-sulfur (Fe-S) centers, to quinones in the photosynthetic chain and possibly in a chloroplast respiratory chain. The immediate electron acceptor for the enzyme in this species is believed to be plastoquinone. Couples the redox reaction to proton translocation, and thus conserves the redox energy in a proton gradient. The protein is NAD(P)H-quinone oxidoreductase subunit K, chloroplastic of Gossypium barbadense (Sea Island cotton).